We begin with the raw amino-acid sequence, 148 residues long: MNLSNLKPAEGSTKTRKRIGRGPGSGLGGTSTRGHKGAKSRSGYSKKIGFEGGQMPLQRRVPKFGFKNINRVEYKAINLETIQKLAEAKNLTKVGMNDFIEAGFISSNQLVKVLGNGSLTTKLDVEANAFSKSAVAAIEAVGGNAVKL.

The disordered stretch occupies residues 1–51 (MNLSNLKPAEGSTKTRKRIGRGPGSGLGGTSTRGHKGAKSRSGYSKKIGFE). The span at 21–31 (RGPGSGLGGTS) shows a compositional bias: gly residues.

Belongs to the universal ribosomal protein uL15 family. In terms of assembly, part of the 50S ribosomal subunit.

In terms of biological role, binds to the 23S rRNA. The sequence is that of Large ribosomal subunit protein uL15 from Phocaeicola vulgatus (strain ATCC 8482 / DSM 1447 / JCM 5826 / CCUG 4940 / NBRC 14291 / NCTC 11154) (Bacteroides vulgatus).